Reading from the N-terminus, the 244-residue chain is Type III pantothenate kinase (244 aa).

Residue 6 to 13 (DVGNTRIK) coordinates ATP. Residues tyrosine 87 and 94 to 97 (GIDR) contribute to the substrate site. Aspartate 96 (proton acceptor) is an active-site residue. Aspartate 117 serves as a coordination point for K(+). Residue threonine 120 coordinates ATP. Threonine 172 lines the substrate pocket.

The protein belongs to the type III pantothenate kinase family. In terms of assembly, homodimer. The cofactor is NH4(+). Requires K(+) as cofactor.

Its subcellular location is the cytoplasm. The catalysed reaction is (R)-pantothenate + ATP = (R)-4'-phosphopantothenate + ADP + H(+). It participates in cofactor biosynthesis; coenzyme A biosynthesis; CoA from (R)-pantothenate: step 1/5. In terms of biological role, catalyzes the phosphorylation of pantothenate (Pan), the first step in CoA biosynthesis. This is Type III pantothenate kinase from Flavobacterium johnsoniae (strain ATCC 17061 / DSM 2064 / JCM 8514 / BCRC 14874 / CCUG 350202 / NBRC 14942 / NCIMB 11054 / UW101) (Cytophaga johnsonae).